Here is a 236-residue protein sequence, read N- to C-terminus: Phosphoribosylaminoimidazole-succinocarboxamide synthase (236 aa).

It belongs to the SAICAR synthetase family.

The enzyme catalyses 5-amino-1-(5-phospho-D-ribosyl)imidazole-4-carboxylate + L-aspartate + ATP = (2S)-2-[5-amino-1-(5-phospho-beta-D-ribosyl)imidazole-4-carboxamido]succinate + ADP + phosphate + 2 H(+). It functions in the pathway purine metabolism; IMP biosynthesis via de novo pathway; 5-amino-1-(5-phospho-D-ribosyl)imidazole-4-carboxamide from 5-amino-1-(5-phospho-D-ribosyl)imidazole-4-carboxylate: step 1/2. The polypeptide is Phosphoribosylaminoimidazole-succinocarboxamide synthase (Pseudomonas entomophila (strain L48)).